The sequence spans 447 residues: Glutamyl-tRNA reductase (447 aa).

Substrate contacts are provided by residues 56 to 59, Ser119, 124 to 126, and Gln130; these read TCNR and ETQ. Catalysis depends on Cys57, which acts as the Nucleophile. Position 201–206 (201–206) interacts with NADP(+); it reads GLGEMS.

Belongs to the glutamyl-tRNA reductase family. As to quaternary structure, homodimer.

The catalysed reaction is (S)-4-amino-5-oxopentanoate + tRNA(Glu) + NADP(+) = L-glutamyl-tRNA(Glu) + NADPH + H(+). It participates in porphyrin-containing compound metabolism; protoporphyrin-IX biosynthesis; 5-aminolevulinate from L-glutamyl-tRNA(Glu): step 1/2. Functionally, catalyzes the NADPH-dependent reduction of glutamyl-tRNA(Glu) to glutamate 1-semialdehyde (GSA). In Helicobacter acinonychis (strain Sheeba), this protein is Glutamyl-tRNA reductase.